The following is a 94-amino-acid chain: Selenoprotein K (94 aa).

A helical transmembrane segment spans residues 20 to 42 (VSFLTDFFWGIAEFVVFFFKTLL). Residues 46–94 (VKKRRGYGSSSDSRYDDGRGPPGNPPRRMGRISHLRGPSPPPMAGGUGR) are disordered. A non-standard amino acid (selenocysteine) is located at residue selenocysteine 92.

This sequence belongs to the selenoprotein K family. As to quaternary structure, interacts with DERL1, DERL2, DERL3 and SELENOS. The SELENOK-SELENOS complex interacts with VCP. Interacts with ZDHHC6. In terms of processing, cleaved by CAPN2/m-calpain in resting macrophages but not in activated macrophages. Macrophage activation up-regulates expression of the calpain inhibitor CAST/calpastatin, resulting in inhibition of CAPN2 activity. Truncated SELENOK proteins produced by failed UGA/Sec decoding are ubiquitinated by the CRL2(KLHDC2) complex, which recognizes the diglycine (Gly-Gly) at the C-terminus of truncated SELENOK proteins. High expression in spleen and intestine (at protein level). Expressed in a range of immune cells including T and B-cells and also in myeloid cells including macrophages, neutrophils and dendritic cells (at protein level).

Its subcellular location is the endoplasmic reticulum membrane. It is found in the cell membrane. Functionally, required for Ca(2+) flux in immune cells and plays a role in T-cell proliferation and in T-cell and neutrophil migration. Involved in endoplasmic reticulum-associated degradation (ERAD) of soluble glycosylated proteins. Required for palmitoylation and cell surface expression of CD36 and involved in macrophage uptake of low-density lipoprotein and in foam cell formation. Together with ZDHHC6, required for palmitoylation of ITPR1 in immune cells, leading to regulate ITPR1 stability and function. Plays a role in protection of cells from ER stress-induced apoptosis. Protects cells from oxidative stress when overexpressed in cardiomyocytes. This Mus musculus (Mouse) protein is Selenoprotein K.